A 99-amino-acid chain; its full sequence is Integration host factor subunit alpha (99 aa).

It belongs to the bacterial histone-like protein family. Heterodimer of an alpha and a beta chain.

Its function is as follows. This protein is one of the two subunits of integration host factor, a specific DNA-binding protein that functions in genetic recombination as well as in transcriptional and translational control. The chain is Integration host factor subunit alpha (ihfA) from Xanthomonas axonopodis pv. citri (strain 306).